A 403-amino-acid chain; its full sequence is Na(+)-translocating NADH-quinone reductase subunit B (403 aa).

A run of 9 helical transmembrane segments spans residues 56 to 76 (MMITVWLCTFPAMFFGMWNTG), 121 to 141 (AYFLPIYAVTFIVGGFWEVLF), 163 to 183 (ILPPTIPLWQVALGISFGVVI), 220 to 240 (WTAVDGYAGATALSLGFAGGI), 258 to 278 (IHGSIGETSTLAIFIGGAVLI), 287 to 307 (IVTGVMLGMIALSTLFNLIGS), 312 to 332 (LFGMPWYWHMVVGGFAFGMIF), 348 to 368 (WVFGILIGVMVVLIRVVNPAF), and 371 to 391 (GMMLAILFANLCAPLIDHFVI). Threonine 230 carries the FMN phosphoryl threonine modification.

It belongs to the NqrB/RnfD family. Composed of six subunits; NqrA, NqrB, NqrC, NqrD, NqrE and NqrF. FMN is required as a cofactor.

It is found in the cell inner membrane. It carries out the reaction a ubiquinone + n Na(+)(in) + NADH + H(+) = a ubiquinol + n Na(+)(out) + NAD(+). Its function is as follows. NQR complex catalyzes the reduction of ubiquinone-1 to ubiquinol by two successive reactions, coupled with the transport of Na(+) ions from the cytoplasm to the periplasm. NqrA to NqrE are probably involved in the second step, the conversion of ubisemiquinone to ubiquinol. This is Na(+)-translocating NADH-quinone reductase subunit B from Stutzerimonas stutzeri (strain A1501) (Pseudomonas stutzeri).